A 315-amino-acid chain; its full sequence is Acetyl-coenzyme A carboxylase carboxyl transferase subunit alpha (315 aa).

The 255-residue stretch at 39-293 (RLQDKSSTLT…RGELASQLAM (255 aa)) folds into the CoA carboxyltransferase C-terminal domain.

It belongs to the AccA family. As to quaternary structure, acetyl-CoA carboxylase is a heterohexamer composed of biotin carboxyl carrier protein (AccB), biotin carboxylase (AccC) and two subunits each of ACCase subunit alpha (AccA) and ACCase subunit beta (AccD).

Its subcellular location is the cytoplasm. The enzyme catalyses N(6)-carboxybiotinyl-L-lysyl-[protein] + acetyl-CoA = N(6)-biotinyl-L-lysyl-[protein] + malonyl-CoA. It participates in lipid metabolism; malonyl-CoA biosynthesis; malonyl-CoA from acetyl-CoA: step 1/1. Functionally, component of the acetyl coenzyme A carboxylase (ACC) complex. First, biotin carboxylase catalyzes the carboxylation of biotin on its carrier protein (BCCP) and then the CO(2) group is transferred by the carboxyltransferase to acetyl-CoA to form malonyl-CoA. This Pseudomonas fluorescens (strain SBW25) protein is Acetyl-coenzyme A carboxylase carboxyl transferase subunit alpha.